The primary structure comprises 263 residues: Ribonuclease HII (263 aa).

The RNase H type-2 domain occupies Gln-71–Asn-262. Residues Asp-77, Glu-78, and Asp-172 each contribute to the a divalent metal cation site.

The protein belongs to the RNase HII family. Mn(2+) is required as a cofactor. The cofactor is Mg(2+).

The protein localises to the cytoplasm. It carries out the reaction Endonucleolytic cleavage to 5'-phosphomonoester.. Functionally, endonuclease that specifically degrades the RNA of RNA-DNA hybrids. This chain is Ribonuclease HII, found in Streptococcus pyogenes serotype M3 (strain ATCC BAA-595 / MGAS315).